We begin with the raw amino-acid sequence, 78 residues long: Translational regulator CsrA (78 aa).

The protein belongs to the CsrA/RsmA family. Homodimer; the beta-strands of each monomer intercalate to form a hydrophobic core, while the alpha-helices form wings that extend away from the core.

The protein localises to the cytoplasm. Its function is as follows. A translational regulator that binds mRNA to regulate translation initiation and/or mRNA stability. Usually binds in the 5'-UTR at or near the Shine-Dalgarno sequence preventing ribosome-binding, thus repressing translation. Its main target seems to be the major flagellin gene, while its function is anatagonized by FliW. The sequence is that of Translational regulator CsrA from Oleidesulfovibrio alaskensis (strain ATCC BAA-1058 / DSM 17464 / G20) (Desulfovibrio alaskensis).